We begin with the raw amino-acid sequence, 267 residues long: Thiamine pyrophosphokinase 2 (267 aa).

Belongs to the thiamine pyrophosphokinase family.

Its subcellular location is the cytoplasm. It localises to the cytosol. It catalyses the reaction thiamine + ATP = thiamine diphosphate + AMP + H(+). It participates in cofactor biosynthesis; thiamine diphosphate biosynthesis; thiamine diphosphate from thiamine: step 1/1. Catalyzes the phosphorylation of thiamine to thiamine pyrophosphate (TPP). TPP is an active cofactor for enzymes involved in glycolysis and energy production. Plant leaves require high levels of TPP for photosynthesis and carbohydrate metabolism. This Oryza sativa subsp. japonica (Rice) protein is Thiamine pyrophosphokinase 2 (TPK2).